A 193-amino-acid chain; its full sequence is MTLSPLKKLAILLGATIFLQGCVAAVIGGGAVAAKVATDPRTTGTQIDDETLEFKVENAVEKDAQIKAEGRVNAVSYNGRVLLIGQVPNSDVKDTATALAKGVEGVNEVYNELTVSPKISFAQISKDSWLTTQVKSKMFVDGRVKATDVKVISENGEVFLLGNVTQSQANAAADIASKISGVKKVIKVFKYLD.

An N-terminal signal peptide occupies residues 1–21 (MTLSPLKKLAILLGATIFLQG). Residue Cys-22 is the site of N-palmitoyl cysteine attachment. Cys-22 carries the S-diacylglycerol cysteine lipid modification. 2 BON domains span residues 48 to 117 (DDET…TVSP) and 126 to 193 (KDSW…KYLD).

It belongs to the lipoprotein DolP family.

Its subcellular location is the cell outer membrane. In terms of biological role, plays an important role in maintaining outer membrane integrity. This is Outer membrane lipoprotein DolP from Haemophilus influenzae (strain ATCC 51907 / DSM 11121 / KW20 / Rd).